A 935-amino-acid chain; its full sequence is Peptidyl-glycine alpha-amidating monooxygenase A (935 aa).

A signal peptide spans 1 to 36 (MASLSSSFLVLFLLFQNSCYCFRSPLSVFKRYEEST). The interval 1–390 (MASLSSSFLV…KREEEEVLDQ (390 aa)) is peptidylglycine alpha-hydroxylating monooxygenase. Residues 37–825 (RSLSNDCLGT…VQESSAGVSF (789 aa)) are Intragranular-facing. 5 cysteine pairs are disulfide-bonded: Cys-43–Cys-182, Cys-77–Cys-122, Cys-110–Cys-127, Cys-223–Cys-330, and Cys-289–Cys-311. Cu(2+) is bound by residues His-103 and His-104. Positions 168, 238, 240, and 310 each coordinate Cu(2+). The disordered stretch occupies residues 362 to 385 (HGHHHTEAEPEKNTGLQQPKREEE). A peptidyl-alpha-hydroxyglycine alpha-amidating lyase region spans residues 391–712 (DVHLEEDTDW…SPSKAEHRSV (322 aa)). Arg-426 provides a ligand contact to a protein. NHL repeat units follow at residues 463 to 504 (SKVL…LGAG), 512 to 557 (LGRA…FSPN), and 565 to 609 (GEET…FHAE). 2 cysteine pairs are disulfide-bonded: Cys-526–Cys-547 and Cys-594–Cys-605. Tyr-546 and Arg-598 together coordinate a protein. An N-linked (GlcNAc...) asparagine glycan is attached at Asn-658. An NHL 4 repeat occupies 662–705 (GDILDTFIPARKNFDMPHDIAAADDGTVYVGDAHANAVWKFSPS). Residues 728–751 (FETHIRSRPKTNESVEKQTQEKQQ) are compositionally biased toward basic and acidic residues. Disordered regions lie at residues 728–764 (FETH…TQEK) and 778–812 (QEKQ…TQEK). The N-linked (GlcNAc...) asparagine glycan is linked to Asn-739. Polar residues predominate over residues 755–764 (NSAGVSTQEK). A helical transmembrane segment spans residues 826-846 (VLIITLLIIPIAVLIAIAIFI). Residues 847–935 (RWRKVRMYGG…PIPPAPVSSS (89 aa)) lie on the Cytoplasmic side of the membrane. Residues 896 to 935 (KGFDRLSTEGSDQEKDDDDGSDSEEEYSAPPIPPAPVSSS) form a disordered region. Positions 909–922 (EKDDDDGSDSEEEY) are enriched in acidic residues. Residues 925–935 (PPIPPAPVSSS) are compositionally biased toward pro residues.

This sequence in the C-terminal section; belongs to the peptidyl-alpha-hydroxyglycine alpha-amidating lyase family. In the N-terminal section; belongs to the copper type II ascorbate-dependent monooxygenase family. As to quaternary structure, monomer. Requires Zn(2+) as cofactor. Cu(2+) is required as a cofactor.

It is found in the cytoplasmic vesicle. The protein localises to the secretory vesicle membrane. The enzyme catalyses a [peptide]-C-terminal glycine + 2 L-ascorbate + O2 = a [peptide]-C-terminal (2S)-2-hydroxyglycine + 2 monodehydro-L-ascorbate radical + H2O. The catalysed reaction is a [peptide]-C-terminal (2S)-2-hydroxyglycine = a [peptide]-C-terminal amide + glyoxylate. Bifunctional enzyme that catalyzes amidation of the C-terminus of proteins. Alpha-amidation is present at the C-terminus of many endocrine hormones and neuropeptides and is required for their activity. C-terminal amidation also takes place in response to protein fragmentation triggered by oxidative stress, promoting degradation of amidated protein fragments by the proteasome. Alpha-amidation involves two sequential reactions, both of which are catalyzed by separate catalytic domains of the enzyme. The first step, catalyzed by peptidyl alpha-hydroxylating monooxygenase (PHM) domain, is the copper-, ascorbate-, and O2- dependent stereospecific hydroxylation (with S stereochemistry) at the alpha-carbon (C-alpha) of the C-terminal glycine of the peptidylglycine substrate. The second step, catalyzed by the peptidylglycine amidoglycolate lyase (PAL) domain, is the zinc-dependent cleavage of the N-C-alpha bond, producing the alpha-amidated peptide and glyoxylate. This Xenopus laevis (African clawed frog) protein is Peptidyl-glycine alpha-amidating monooxygenase A (pam-a).